The chain runs to 287 residues: GPN-loop GTPase 3 (287 aa).

12–17 (GAGKST) lines the GTP pocket. The Gly-Pro-Asn (GPN)-loop; involved in dimer interface motif lies at 69 to 71 (GPN). 172 to 175 (SKMD) contacts GTP.

Belongs to the GPN-loop GTPase family. Heterodimers with GPN1 or GPN2. Binds to RNA polymerase II (RNAPII).

Functionally, small GTPase required for proper nuclear import of RNA polymerase II and III (RNAPII and RNAPIII). May act at an RNAP assembly step prior to nuclear import. The chain is GPN-loop GTPase 3 from Cryptococcus neoformans var. neoformans serotype D (strain B-3501A) (Filobasidiella neoformans).